The following is a 236-amino-acid chain: uncharacterized protein (236 aa).

The N-terminal stretch at 1-22 (MEFKMQKIILGMLVVTASNAMA) is a signal peptide.

This is an uncharacterized protein from Pasteurella multocida (strain Pm70).